The primary structure comprises 59 residues: Small ribosomal subunit protein bS21 (59 aa).

Belongs to the bacterial ribosomal protein bS21 family.

This Acaryochloris marina (strain MBIC 11017) protein is Small ribosomal subunit protein bS21.